Here is a 1351-residue protein sequence, read N- to C-terminus: Serine-rich adhesin for platelets (1351 aa).

An N-terminal signal peptide occupies residues 1–89 (MSKRQKEFHD…VNMLHDQQAF (89 aa)). The tract at residues 90 to 230 (AASDAPLTSE…KTSTTSTSTA (141 aa)) is serine-rich repeat region 1, SRR1. Over residues 100–111 (LNTQSETVGNQN) the composition is skewed to polar residues. Disordered stretches follow at residues 100-228 (LNTQ…TSTS) and 751-1323 (NSMS…GLLG). 2 stretches are compositionally biased toward low complexity: residues 112–133 (STTI…NSSS) and 149–228 (NVTS…TSTS). Residues 231–751 (PIKLRTFSRL…TTFKYEVTRN (521 aa)) form a non-repeat region (NRR) region. The span at 752 to 1294 (SMSDSVSTSG…SQSTLSATSE (543 aa)) shows a compositional bias: low complexity. Residues 752–1312 (SMSDSVSTSG…AQSEKRLPDT (561 aa)) are serine-rich repeat region 1, SRR1. Residues 1309–1313 (LPDTG) carry the LPXTG sorting signal motif. Thr1312 carries the post-translational modification Pentaglycyl murein peptidoglycan amidated threonine. Residues 1313–1351 (GDSIKQNGLLGGVMTLLVGLGLMKRKKKKDENDQDDSQA) constitute a propeptide, removed by sortase.

This sequence belongs to the serine-rich repeat protein (SRRP) family. In terms of processing, proteolytically cleaved by a metalloprotease. Glycosylated. It is probable that most of the Ser residues in SSR1 and SSR2 are O-GlcNAcylated. Sequential glycosylation by sugar transferases are able to generate complex sugar polymorphisms.

The protein localises to the secreted. It localises to the cell wall. In terms of biological role, mediates binding to human platelets, possibly through a receptor-ligand interaction. Probably associated with virulence in endovascular infection. The protein is Serine-rich adhesin for platelets (sasA) of Staphylococcus aureus (strain MRSA252).